The following is a 145-amino-acid chain: Early nodulin-like protein 21 (145 aa).

The signal sequence occupies residues 1–17 (MFLWLVIVLTISASVSS). Positions 18–116 (YEHKLNWVVP…GQKMIVEVIS (99 aa)) constitute a Phytocyanin domain. Asn30 and Asn71 each carry an N-linked (GlcNAc...) asparagine glycan. A disulfide bond links Cys70 and Cys104. A lipid anchor (GPI-anchor amidated serine) is attached at Ser116. A propeptide spans 117–145 (RDHTTTSAAPPAAFAVLLCFFSLSLYFVA) (removed in mature form).

It belongs to the early nodulin-like (ENODL) family. In terms of tissue distribution, mostly expressed in leaves and flowers, and, to a lower extent, in roots and stems, but barely in seedlings and seeds.

It localises to the cell membrane. Its function is as follows. May act as a carbohydrate transporter. In Arabidopsis thaliana (Mouse-ear cress), this protein is Early nodulin-like protein 21.